Here is a 945-residue protein sequence, read N- to C-terminus: Isoleucine--tRNA ligase 1 (945 aa).

The short motif at 66–76 is the 'HIGH' region element; the sequence is PYANGDIHLGH. Glu-581 contacts L-isoleucyl-5'-AMP. The short motif at 622–626 is the 'KMSKS' region element; it reads KMSKS. Lys-625 is an ATP binding site. 4 residues coordinate Zn(2+): Cys-908, Cys-911, Cys-928, and Cys-931.

This sequence belongs to the class-I aminoacyl-tRNA synthetase family. IleS type 1 subfamily. In terms of assembly, monomer. Zn(2+) serves as cofactor.

Its subcellular location is the cytoplasm. The catalysed reaction is tRNA(Ile) + L-isoleucine + ATP = L-isoleucyl-tRNA(Ile) + AMP + diphosphate. In terms of biological role, catalyzes the attachment of isoleucine to tRNA(Ile). As IleRS can inadvertently accommodate and process structurally similar amino acids such as valine, to avoid such errors it has two additional distinct tRNA(Ile)-dependent editing activities. One activity is designated as 'pretransfer' editing and involves the hydrolysis of activated Val-AMP. The other activity is designated 'posttransfer' editing and involves deacylation of mischarged Val-tRNA(Ile). The sequence is that of Isoleucine--tRNA ligase 1 from Burkholderia pseudomallei (strain K96243).